Reading from the N-terminus, the 339-residue chain is Phosphoribosylformylglycinamidine cyclo-ligase (339 aa).

This sequence belongs to the AIR synthase family.

It is found in the cytoplasm. The enzyme catalyses 2-formamido-N(1)-(5-O-phospho-beta-D-ribosyl)acetamidine + ATP = 5-amino-1-(5-phospho-beta-D-ribosyl)imidazole + ADP + phosphate + H(+). Its pathway is purine metabolism; IMP biosynthesis via de novo pathway; 5-amino-1-(5-phospho-D-ribosyl)imidazole from N(2)-formyl-N(1)-(5-phospho-D-ribosyl)glycinamide: step 2/2. The chain is Phosphoribosylformylglycinamidine cyclo-ligase from Streptococcus thermophilus (strain ATCC BAA-491 / LMD-9).